We begin with the raw amino-acid sequence, 418 residues long: Glutamate dehydrogenase (418 aa).

Residue K105 is part of the active site. NAD(+) is bound at residue 217–223; it reads GYGNVGY.

This sequence belongs to the Glu/Leu/Phe/Val dehydrogenases family. As to quaternary structure, homohexamer.

It is found in the cytoplasm. The enzyme catalyses L-glutamate + NAD(+) + H2O = 2-oxoglutarate + NH4(+) + NADH + H(+). The catalysed reaction is L-glutamate + NADP(+) + H2O = 2-oxoglutarate + NH4(+) + NADPH + H(+). This chain is Glutamate dehydrogenase (gdhA), found in Aeropyrum pernix (strain ATCC 700893 / DSM 11879 / JCM 9820 / NBRC 100138 / K1).